The following is a 429-amino-acid chain: Histidine--tRNA ligase (429 aa).

Belongs to the class-II aminoacyl-tRNA synthetase family. Homodimer.

The protein localises to the cytoplasm. It carries out the reaction tRNA(His) + L-histidine + ATP = L-histidyl-tRNA(His) + AMP + diphosphate + H(+). This is Histidine--tRNA ligase from Corynebacterium efficiens (strain DSM 44549 / YS-314 / AJ 12310 / JCM 11189 / NBRC 100395).